The sequence spans 683 residues: DNA-directed RNA polymerase subunit beta' (683 aa).

Zn(2+) contacts are provided by C69, C71, C87, and C90. Positions 489, 491, and 493 each coordinate Mg(2+).

It belongs to the RNA polymerase beta' chain family. RpoC1 subfamily. In plastids the minimal PEP RNA polymerase catalytic core is composed of four subunits: alpha, beta, beta', and beta''. When a (nuclear-encoded) sigma factor is associated with the core the holoenzyme is formed, which can initiate transcription. Requires Mg(2+) as cofactor. Zn(2+) is required as a cofactor.

It localises to the plastid. The protein resides in the chloroplast. The enzyme catalyses RNA(n) + a ribonucleoside 5'-triphosphate = RNA(n+1) + diphosphate. In terms of biological role, DNA-dependent RNA polymerase catalyzes the transcription of DNA into RNA using the four ribonucleoside triphosphates as substrates. The sequence is that of DNA-directed RNA polymerase subunit beta' from Triticum aestivum (Wheat).